The following is a 377-amino-acid chain: O-phospho-L-seryl-tRNA:Cys-tRNA synthase (377 aa).

Residues 82–83 (AR), Asn189, and 212–214 (SGH) each bind pyridoxal 5'-phosphate. Lys215 is modified (N6-(pyridoxal phosphate)lysine).

The protein belongs to the SepCysS family. As to quaternary structure, homodimer. Interacts with SepRS. Pyridoxal 5'-phosphate serves as cofactor.

The catalysed reaction is O-phospho-L-seryl-tRNA(Cys) + hydrogen sulfide + H(+) = L-cysteinyl-tRNA(Cys) + phosphate. In terms of biological role, converts O-phospho-L-seryl-tRNA(Cys) (Sep-tRNA(Cys)) to L-cysteinyl-tRNA(Cys) (Cys-tRNA(Cys)). The protein is O-phospho-L-seryl-tRNA:Cys-tRNA synthase of Methanocaldococcus jannaschii (strain ATCC 43067 / DSM 2661 / JAL-1 / JCM 10045 / NBRC 100440) (Methanococcus jannaschii).